The primary structure comprises 202 residues: Holliday junction branch migration complex subunit RuvA (202 aa).

The tract at residues Met1–Ala64 is domain I. The domain II stretch occupies residues Ser65–Ala143. Residues Leu144–Pro154 are flexible linker. The interval Pro154 to Ile202 is domain III.

The protein belongs to the RuvA family. In terms of assembly, homotetramer. Forms an RuvA(8)-RuvB(12)-Holliday junction (HJ) complex. HJ DNA is sandwiched between 2 RuvA tetramers; dsDNA enters through RuvA and exits via RuvB. An RuvB hexamer assembles on each DNA strand where it exits the tetramer. Each RuvB hexamer is contacted by two RuvA subunits (via domain III) on 2 adjacent RuvB subunits; this complex drives branch migration. In the full resolvosome a probable DNA-RuvA(4)-RuvB(12)-RuvC(2) complex forms which resolves the HJ.

It localises to the cytoplasm. Its function is as follows. The RuvA-RuvB-RuvC complex processes Holliday junction (HJ) DNA during genetic recombination and DNA repair, while the RuvA-RuvB complex plays an important role in the rescue of blocked DNA replication forks via replication fork reversal (RFR). RuvA specifically binds to HJ cruciform DNA, conferring on it an open structure. The RuvB hexamer acts as an ATP-dependent pump, pulling dsDNA into and through the RuvAB complex. HJ branch migration allows RuvC to scan DNA until it finds its consensus sequence, where it cleaves and resolves the cruciform DNA. This is Holliday junction branch migration complex subunit RuvA from Pseudomonas fluorescens (strain ATCC BAA-477 / NRRL B-23932 / Pf-5).